A 532-amino-acid chain; its full sequence is Intercellular adhesion molecule 1 (532 aa).

Residues 1 to 27 (MAPSSPRPALPALLVLLGALFPGPGNA) form the signal peptide. The Extracellular segment spans residues 28–480 (QTSVSPPKVI…TVNVLSPRYE (453 aa)). 2 Ig-like C2-type domains span residues 41–103 (GGSV…QSTA) and 128–193 (GKDL…LDLR). Disulfide bonds link Cys48–Cys92, Cys52–Cys96, and Cys135–Cys186. Asn145 carries N-linked (GlcNAc...) asparagine glycosylation. A Cell attachment site; atypical motif is present at residues 152–154 (RGE). Residues Asn183, Asn202, Asn267, and Asn296 are each glycosylated (N-linked (GlcNAc...) asparagine). Ig-like C2-type domains lie at 230 to 297 (DTQG…LGNQ) and 325 to 378 (GTEV…LEVA). A disulfide bond links Cys237 and Cys290. Cys332 and Cys371 are joined by a disulfide. N-linked (GlcNAc...) asparagine glycosylation is found at Asn385 and Asn406. 3 disulfide bridges follow: Cys403-Cys419, Cys419-Cys457, and Cys431-Cys457. In terms of domain architecture, Ig-like C2-type 5 spans 412–464 (NSQQTPMCQASGNPLPELKCLKDGTFPLPVGESVTVTRDLEGTYLCRARSTQG). Residues 481–503 (IVIITVVAAAVIMGTAGLSTYLY) traverse the membrane as a helical segment. Over 504-532 (NRQRKIRKYRLQQAQKGTPMKPNTQATPP) the chain is Cytoplasmic. Phosphothreonine is present on residues Thr521 and Thr530.

Belongs to the immunoglobulin superfamily. ICAM family. In terms of assembly, homodimer. Interacts with MUC1 and promotes cell aggregation in epithelial cells. Interacts with ARHGEF26/SGEF. Interacts (on T cell side) with CD81, CD247 and CD9 at immunological synapses between antigen-presenting cells and T cells. Monoubiquitinated, which is promoted by MARCH9 and leads to endocytosis.

It localises to the membrane. In terms of biological role, ICAM proteins are ligands for the leukocyte adhesion protein LFA-1 (integrin alpha-L/beta-2). During leukocyte trans-endothelial migration, ICAM1 engagement promotes the assembly of endothelial apical cups through ARHGEF26/SGEF and RHOG activation. The polypeptide is Intercellular adhesion molecule 1 (ICAM1) (Pan paniscus (Pygmy chimpanzee)).